A 484-amino-acid polypeptide reads, in one-letter code: Probable cytosol aminopeptidase (484 aa).

2 residues coordinate Mn(2+): Lys256 and Asp261. The active site involves Lys268. Positions 279, 338, and 340 each coordinate Mn(2+). Arg342 is a catalytic residue.

It belongs to the peptidase M17 family. It depends on Mn(2+) as a cofactor.

The protein resides in the cytoplasm. It catalyses the reaction Release of an N-terminal amino acid, Xaa-|-Yaa-, in which Xaa is preferably Leu, but may be other amino acids including Pro although not Arg or Lys, and Yaa may be Pro. Amino acid amides and methyl esters are also readily hydrolyzed, but rates on arylamides are exceedingly low.. It carries out the reaction Release of an N-terminal amino acid, preferentially leucine, but not glutamic or aspartic acids.. Its function is as follows. Presumably involved in the processing and regular turnover of intracellular proteins. Catalyzes the removal of unsubstituted N-terminal amino acids from various peptides. In Actinobacillus succinogenes (strain ATCC 55618 / DSM 22257 / CCUG 43843 / 130Z), this protein is Probable cytosol aminopeptidase.